The chain runs to 208 residues: Large ribosomal subunit protein bL25 (208 aa).

This sequence belongs to the bacterial ribosomal protein bL25 family. CTC subfamily. As to quaternary structure, part of the 50S ribosomal subunit; part of the 5S rRNA/L5/L18/L25 subcomplex. Contacts the 5S rRNA. Binds to the 5S rRNA independently of L5 and L18.

This is one of the proteins that binds to the 5S RNA in the ribosome where it forms part of the central protuberance. This chain is Large ribosomal subunit protein bL25, found in Acidovorax ebreus (strain TPSY) (Diaphorobacter sp. (strain TPSY)).